The following is a 292-amino-acid chain: 33 kDa chaperonin (292 aa).

Cystine bridges form between Cys229/Cys231 and Cys262/Cys265.

The protein belongs to the HSP33 family. Post-translationally, under oxidizing conditions two disulfide bonds are formed involving the reactive cysteines. Under reducing conditions zinc is bound to the reactive cysteines and the protein is inactive.

The protein localises to the cytoplasm. Redox regulated molecular chaperone. Protects both thermally unfolding and oxidatively damaged proteins from irreversible aggregation. Plays an important role in the bacterial defense system toward oxidative stress. The chain is 33 kDa chaperonin from Photobacterium profundum (strain SS9).